The primary structure comprises 248 residues: Mitochondrial import inner membrane translocase subunit Tim21 (248 aa).

Residues 1–18 (MICTFLRAVQYTEKLHRS) constitute a mitochondrion transit peptide. The disordered stretch occupies residues 67–98 (TQGPSPRKAKEDGSKQVSVHRSQRGGTAVPTS). The chain crosses the membrane as a helical span at residues 108–128 (FTYLIVVLFGISITGGLFYTI).

This sequence belongs to the TIM21 family. In terms of assembly, component of the TIM23 complex. Component of the MITRAC (mitochondrial translation regulation assembly intermediate of cytochrome c oxidase complex) complex, the core components of this complex being COA3/MITRAC12 and COX14. Interacts with COA3 and MT-CO1/COX1.

The protein localises to the mitochondrion membrane. Its function is as follows. Participates in the translocation of transit peptide-containing proteins across the mitochondrial inner membrane. Also required for assembly of mitochondrial respiratory chain complex I and complex IV as component of the MITRAC (mitochondrial translation regulation assembly intermediate of cytochrome c oxidase complex) complex. Probably shuttles between the presequence translocase and respiratory-chain assembly intermediates in a process that promotes incorporation of early nuclear-encoded subunits into these complexes. This Homo sapiens (Human) protein is Mitochondrial import inner membrane translocase subunit Tim21 (TIMM21).